The primary structure comprises 617 residues: Zinc metalloproteinase nas-36 (617 aa).

A signal peptide spans 1–22 (MRLCHSIILFNSLISISICSKA). The propeptide occupies 23–126 (DDPALLVASE…SKDKTKRLRR (104 aa)). In terms of domain architecture, Peptidase M12A spans 127–322 (SFVSDKTATW…VATINTAYCK (196 aa)). 9 disulfides stabilise this stretch: Cys-169–Cys-321, Cys-192–Cys-211, Cys-325–Cys-346, Cys-348–Cys-357, Cys-368–Cys-397, Cys-425–Cys-445, Cys-519–Cys-550, Cys-523–Cys-555, and Cys-535–Cys-540. N-linked (GlcNAc...) asparagine glycosylation is present at Asn-174. A Zn(2+)-binding site is contributed by His-219. Residue Glu-220 is part of the active site. Residues His-223 and His-229 each coordinate Zn(2+). An EGF-like domain is found at 317 to 358 (NTAYCKDECKSEKTKCENGGYMRPSKCSECLCPDGLGGEKCE). The CUB domain occupies 368–482 (CGGIIKLTEE…IGFKIQAKST (115 aa)). Positions 507–556 (PNVWADWGEWSMCSRTCGGCGIRSRVRSCRSKKCEGRRQEFGTCNLKACP) constitute a TSP type-1 domain.

Zn(2+) serves as cofactor. As to expression, expressed in hypodermal cells. Also detected in the hypodermal seam cells in L4 larvae and young adults. In old adult hermaphrodites, it localizes to the vulva (at protein level).

The protein resides in the secreted. Functionally, metalloprotease. Involved in molting, a process during larval stages in which a new cuticle is formed and the old cuticle is shed. The sequence is that of Zinc metalloproteinase nas-36 (nas-36) from Caenorhabditis elegans.